The chain runs to 427 residues: Kynureninase (427 aa).

Pyridoxal 5'-phosphate is bound by residues T104, T105, 132 to 135 (FPSD), D213, H216, and Y238. K239 carries the N6-(pyridoxal phosphate)lysine modification. The pyridoxal 5'-phosphate site is built by W267 and T295.

It belongs to the kynureninase family. In terms of assembly, homodimer. Pyridoxal 5'-phosphate is required as a cofactor.

The enzyme catalyses L-kynurenine + H2O = anthranilate + L-alanine + H(+). The catalysed reaction is 3-hydroxy-L-kynurenine + H2O = 3-hydroxyanthranilate + L-alanine + H(+). It participates in amino-acid degradation; L-kynurenine degradation; L-alanine and anthranilate from L-kynurenine: step 1/1. Its pathway is cofactor biosynthesis; NAD(+) biosynthesis; quinolinate from L-kynurenine: step 2/3. Functionally, catalyzes the cleavage of L-kynurenine (L-Kyn) and L-3-hydroxykynurenine (L-3OHKyn) into anthranilic acid (AA) and 3-hydroxyanthranilic acid (3-OHAA), respectively. In Shouchella clausii (strain KSM-K16) (Alkalihalobacillus clausii), this protein is Kynureninase.